An 835-amino-acid chain; its full sequence is Phenylalanine--tRNA ligase beta subunit (835 aa).

The region spanning 44-158 is the tRNA-binding domain; sequence GPVDGPLTVG…LPGADGADVL (115 aa). Residues 414–493 enclose the B5 domain; it reads WSLPPIRIAV…RLEGLEVIRS (80 aa). Residues Asp471, Asp477, Glu480, and Glu481 each contribute to the Mg(2+) site. The FDX-ACB domain occupies 741 to 834; sequence SPFPAVLQDV…AAERVGATLR (94 aa).

It belongs to the phenylalanyl-tRNA synthetase beta subunit family. Type 1 subfamily. As to quaternary structure, tetramer of two alpha and two beta subunits. Mg(2+) is required as a cofactor.

The protein localises to the cytoplasm. The catalysed reaction is tRNA(Phe) + L-phenylalanine + ATP = L-phenylalanyl-tRNA(Phe) + AMP + diphosphate + H(+). The protein is Phenylalanine--tRNA ligase beta subunit of Mycobacterium leprae (strain TN).